A 329-amino-acid polypeptide reads, in one-letter code: Ephrin-B1 (329 aa).

The N-terminal stretch at 1–20 (MEGLRRLLGLLLVLYRLCSA) is a signal peptide. Over 21 to 226 (LGKNLEPVTW…FFNSKIAVFA (206 aa)) the chain is Extracellular. The Ephrin RBD domain maps to 23–157 (KNLEPVTWNS…TRSMKIIMKV (135 aa)). 2 disulfide bridges follow: C57–C94 and C82–C146. N132 is a glycosylation site (N-linked (GlcNAc...) asparagine). The disordered stretch occupies residues 163–192 (AVPPEQLTTTRPSKEADNTGKIATFGPWNG). The N-linked (GlcNAc...) asparagine glycan is linked to N203. The chain crosses the membrane as a helical span at residues 227 to 247 (AIGAGCVIFILIIIFLVVLLI). Residues 248-329 (KIRKRHRKHT…QSPANIYYKV (82 aa)) lie on the Cytoplasmic side of the membrane. The short motif at 327-329 (YKV) is the PDZ-binding element.

This sequence belongs to the ephrin family. As to quaternary structure, interacts with TLE4 through the PDZ-binding motif. Inducible phosphorylation of tyrosine residues in the cytoplasmic domain. Tyrosine phosphorylation inhibits TLE4-binding. Expressed at low levels in most tissues with highest levels in the kidney, oocytes, ovary and testis.

It is found in the membrane. Its function is as follows. Cell surface transmembrane ligand for Eph receptors, a family of receptor tyrosine kinases which are crucial for migration, repulsion and adhesion during neuronal, vascular and epithelial development. Binds promiscuously Eph receptors residing on adjacent cells, leading to contact-dependent bidirectional signaling into neighboring cells. The signaling pathway downstream of the receptor is referred to as forward signaling while the signaling pathway downstream of the ephrin ligand is referred to as reverse signaling. May have a role in the developing mesenchymal and nervous tissue. The chain is Ephrin-B1 (efnb1) from Xenopus laevis (African clawed frog).